Consider the following 271-residue polypeptide: Endonuclease V (271 aa).

Residues 46–67 (TRTGDAPDVDQTTLSTSADDRT) form a disordered region. Residues Asp76 and Asp140 each contribute to the Mg(2+) site.

Belongs to the endonuclease V family. The cofactor is Mg(2+).

It localises to the cytoplasm. The catalysed reaction is Endonucleolytic cleavage at apurinic or apyrimidinic sites to products with a 5'-phosphate.. Its function is as follows. DNA repair enzyme involved in the repair of deaminated bases. Selectively cleaves double-stranded DNA at the second phosphodiester bond 3' to a deoxyinosine leaving behind the intact lesion on the nicked DNA. This is Endonuclease V from Haloarcula marismortui (strain ATCC 43049 / DSM 3752 / JCM 8966 / VKM B-1809) (Halobacterium marismortui).